Consider the following 491-residue polypeptide: Cobyric acid synthase (491 aa).

The GATase cobBQ-type domain maps to 253 to 429 (AHRVAVVRLP…WHGSLEGDAL (177 aa)). The active-site Nucleophile is the cysteine 334. Histidine 421 is a catalytic residue.

The protein belongs to the CobB/CobQ family. CobQ subfamily.

The protein operates within cofactor biosynthesis; adenosylcobalamin biosynthesis. Functionally, catalyzes amidations at positions B, D, E, and G on adenosylcobyrinic A,C-diamide. NH(2) groups are provided by glutamine, and one molecule of ATP is hydrogenolyzed for each amidation. This Mycobacterium ulcerans (strain Agy99) protein is Cobyric acid synthase.